A 182-amino-acid chain; its full sequence is ATP synthase subunit delta (182 aa).

This sequence belongs to the ATPase delta chain family. F-type ATPases have 2 components, F(1) - the catalytic core - and F(0) - the membrane proton channel. F(1) has five subunits: alpha(3), beta(3), gamma(1), delta(1), epsilon(1). F(0) has three main subunits: a(1), b(2) and c(10-14). The alpha and beta chains form an alternating ring which encloses part of the gamma chain. F(1) is attached to F(0) by a central stalk formed by the gamma and epsilon chains, while a peripheral stalk is formed by the delta and b chains.

The protein resides in the cell inner membrane. Functionally, f(1)F(0) ATP synthase produces ATP from ADP in the presence of a proton or sodium gradient. F-type ATPases consist of two structural domains, F(1) containing the extramembraneous catalytic core and F(0) containing the membrane proton channel, linked together by a central stalk and a peripheral stalk. During catalysis, ATP synthesis in the catalytic domain of F(1) is coupled via a rotary mechanism of the central stalk subunits to proton translocation. This protein is part of the stalk that links CF(0) to CF(1). It either transmits conformational changes from CF(0) to CF(1) or is implicated in proton conduction. The protein is ATP synthase subunit delta of Histophilus somni (strain 129Pt) (Haemophilus somnus).